Reading from the N-terminus, the 482-residue chain is NADH-quinone oxidoreductase subunit D (482 aa).

Positions 1–16 (MTTNTSTSSTTDDLTT) are enriched in low complexity. The tract at residues 1 to 48 (MTTNTSTSSTTDDLTTGAPNGTGAPDGANGVGGPTGTVGGPGEHPAYE) is disordered. The span at 29–42 (NGVGGPTGTVGGPG) shows a compositional bias: gly residues.

This sequence belongs to the complex I 49 kDa subunit family. NDH-1 is composed of 14 different subunits. Subunits NuoB, C, D, E, F, and G constitute the peripheral sector of the complex.

The protein localises to the cell membrane. The enzyme catalyses a quinone + NADH + 5 H(+)(in) = a quinol + NAD(+) + 4 H(+)(out). In terms of biological role, NDH-1 shuttles electrons from NADH, via FMN and iron-sulfur (Fe-S) centers, to quinones in the respiratory chain. The immediate electron acceptor for the enzyme in this species is believed to be a menaquinone. Couples the redox reaction to proton translocation (for every two electrons transferred, four hydrogen ions are translocated across the cytoplasmic membrane), and thus conserves the redox energy in a proton gradient. This Frankia casuarinae (strain DSM 45818 / CECT 9043 / HFP020203 / CcI3) protein is NADH-quinone oxidoreductase subunit D.